The sequence spans 159 residues: Siroheme decarboxylase beta subunit (159 aa).

Position 152-157 (152-157 (KTSMTY)) interacts with substrate.

It belongs to the Ahb/Nir family. As to quaternary structure, forms a heterodimer composed of AhbA and AhbB.

It catalyses the reaction siroheme + 2 H(+) = 12,18-didecarboxysiroheme + 2 CO2. It participates in porphyrin-containing compound metabolism; protoheme biosynthesis. Involved in siroheme-dependent heme b biosynthesis. Catalyzes the decarboxylation of siroheme into didecarboxysiroheme. Siroheme is decarboxylated to monodecarboxysiroheme, which is in turn decarboxylated to didecarboxysiroheme. The sequence is that of Siroheme decarboxylase beta subunit from Desulfovibrio desulfuricans (strain ATCC 27774 / DSM 6949 / MB).